The sequence spans 360 residues: Peptide chain release factor 1 (360 aa).

At Gln-235 the chain carries N5-methylglutamine.

This sequence belongs to the prokaryotic/mitochondrial release factor family. In terms of processing, methylated by PrmC. Methylation increases the termination efficiency of RF1.

It is found in the cytoplasm. Its function is as follows. Peptide chain release factor 1 directs the termination of translation in response to the peptide chain termination codons UAG and UAA. This Burkholderia multivorans (strain ATCC 17616 / 249) protein is Peptide chain release factor 1.